Here is a 729-residue protein sequence, read N- to C-terminus: 1,4-alpha-glucan branching enzyme GlgB (729 aa).

The Nucleophile role is filled by aspartate 408. Glutamate 461 (proton donor) is an active-site residue.

Belongs to the glycosyl hydrolase 13 family. GlgB subfamily. Monomer.

It catalyses the reaction Transfers a segment of a (1-&gt;4)-alpha-D-glucan chain to a primary hydroxy group in a similar glucan chain.. The protein operates within glycan biosynthesis; glycogen biosynthesis. Functionally, catalyzes the formation of the alpha-1,6-glucosidic linkages in glycogen by scission of a 1,4-alpha-linked oligosaccharide from growing alpha-1,4-glucan chains and the subsequent attachment of the oligosaccharide to the alpha-1,6 position. The polypeptide is 1,4-alpha-glucan branching enzyme GlgB (Vibrio cholerae serotype O1 (strain ATCC 39315 / El Tor Inaba N16961)).